Reading from the N-terminus, the 668-residue chain is Patellin-5 (668 aa).

The segment at 1-263 is disordered; it reads MSQDSATTTP…STTTSTVASR (263 aa). 4 stretches are compositionally biased toward basic and acidic residues: residues 55-68, 82-100, 107-125, and 132-150; these read ESNH…EKVT, AAED…ETAK, TAED…ETVK, and VAED…ETVK. Polar residues predominate over residues 170–186; that stretch reads TPETETSEADTSLLVTS. A compositionally biased stretch (acidic residues) spans 218 to 231; it reads VEDWTEPELPDEAV. The segment covering 244 to 254 has biased composition (pro residues); the sequence is PEPQTPPPPPS. Ser-290 is modified (phosphoserine). The CRAL-TRIO domain occupies 377 to 552; sequence DENLGDDLDK…QYGGLSVDNC (176 aa). The GOLD domain maps to 556-662; sequence SDFTHDDIAT…KKMLIYRFKV (107 aa).

Belongs to the patellin family.

It is found in the membrane. Its subcellular location is the cytoplasm. Carrier protein that may be involved in membrane-trafficking events associated with cell plate formation during cytokinesis. Binds to some hydrophobic molecules such as phosphoinositides and promotes their transfer between the different cellular sites. The protein is Patellin-5 (PATL5) of Arabidopsis thaliana (Mouse-ear cress).